We begin with the raw amino-acid sequence, 800 residues long: Phenylalanine--tRNA ligase beta subunit (800 aa).

A tRNA-binding domain is found at 39–154 (TKDIKKLVVG…EAVKPGTDAL (116 aa)). The 76-residue stretch at 408 to 483 (SFVTPIEITA…RIYGYDEIPS (76 aa)) folds into the B5 domain. D461, D467, E470, and E471 together coordinate Mg(2+). Residues 708 to 800 (PRFPGVTRDI…ALKKHGAIIR (93 aa)) form the FDX-ACB domain.

Belongs to the phenylalanyl-tRNA synthetase beta subunit family. Type 1 subfamily. In terms of assembly, tetramer of two alpha and two beta subunits. Mg(2+) is required as a cofactor.

The protein localises to the cytoplasm. It carries out the reaction tRNA(Phe) + L-phenylalanine + ATP = L-phenylalanyl-tRNA(Phe) + AMP + diphosphate + H(+). The sequence is that of Phenylalanine--tRNA ligase beta subunit from Staphylococcus epidermidis (strain ATCC 12228 / FDA PCI 1200).